The primary structure comprises 184 residues: Serine recombinase PinE (184 aa).

The 134-residue stretch at 1–134 folds into the Resolvase/invertase-type recombinase catalytic domain; the sequence is MLIGYVRVST…AGLETARAQG (134 aa). Ser9 serves as the catalytic O-(5'-phospho-DNA)-serine intermediate. Residues 161-180 constitute a DNA-binding region (H-T-H motif); sequence RQKVAIIYDVGVSTLYKRFP.

This sequence belongs to the site-specific recombinase resolvase family.

In terms of biological role, this protein catalyzes the inversion of an 1800-bp E.coli DNA fragment, the P region, which can exist in either orientation. The function of the inversion is not yet clear. This is Serine recombinase PinE (pinE) from Escherichia coli (strain K12).